The following is a 198-amino-acid chain: Cyclin-dependent kinase inhibitor 1B (198 aa).

Positions 1–12 (MSNVRVSNGSPT) are enriched in polar residues. Residues 1 to 30 (MSNVRVSNGSPTSERRDAKQAEYPKPSACR) are disordered. A Phosphoserine; by UHMK1 modification is found at serine 10. The span at 13-22 (SERRDAKQAE) shows a compositional bias: basic and acidic residues. The segment at 51–91 (DMEEASQNKWNFDFQNHKPLEGKYEWQEVEKGSLPEFYYRP) is interaction with CDK2. At tyrosine 74 the chain carries Phosphotyrosine; by SRC. The disordered stretch occupies residues 87–198 (FYYRPPRPPK…KKPGLRRRQT (112 aa)). The residue at position 88 (tyrosine 88) is a Phosphotyrosine; by ABL, LYN and SRC. Phosphotyrosine is present on tyrosine 89. Positions 104–113 (QESQDVSGTR) are enriched in polar residues. Residues 126–137 (EDTHLVDQKTDA) show a composition bias toward basic and acidic residues. The Nuclear localization signal signature appears at 153–169 (KRPATDDSSPQNKRANR). The residue at position 157 (threonine 157) is a Phosphothreonine; by CaMK1, PKB/AKT1 and PIM1. Threonine 170 is subject to Phosphothreonine. The segment covering 175-186 (SDGSPNAGSVEQ) has biased composition (polar residues). Residue threonine 187 is modified to Phosphothreonine; by PKB/AKT1, CDK1 and CDK2. Threonine 198 carries the phosphothreonine; by CaMK1, PKB/AKT1, RPS6KA1, RPS6KA3 and PIM1 modification.

Belongs to the CDI family. As to quaternary structure, forms a ternary complex composed of CCNE1, CDK2 and CDKN1B. Interacts directly with CCNE1; the interaction is inhibited by CDK2-dependent phosphorylation on Thr-187. Interacts with COPS5, subunit of the COP9 signalosome complex; the interaction leads to CDKN1B degradation. Interacts with NUP50; the interaction leads to nuclear import and degradation of phosphorylated CDKN1B. Interacts with CCND1 and SNX6. Interacts (Thr-198-phosphorylated form) with 14-3-3 proteins, binds strongly YWHAQ, weakly YWHAE and YWHAH, but not YWHAB nor YWHAZ; the interaction with YWHAQ results in translocation to the cytoplasm. Interacts with AKT1 and LYN; the interactions lead to cytoplasmic mislocation, phosphorylation of CDKN1B and inhibition of cell cycle arrest. Forms a ternary complex with CCNA2 and CDK2; CDKN1B inhibits the kinase activity of CDK2 through conformational rearrangements. Interacts (unphosphorylated form) with CDK2. Forms a complex with CDK2 and SPDYA, but does not directly interact with SPDYA. Forms a ternary complex composed of cyclin D, CDK4 and CDKN1B. Interacts (phosphorylated on Tyr-88 and Tyr-89) with CDK4; the interaction is required for cyclin D and CDK4 complex assembly, induces nuclear translocation and activates the CDK4 kinase activity. Interacts with GRB2. Interacts with PIM1. Identified in a complex with SKP1, SKP2 and CKS1B. Interacts with UHMK1; the interaction leads to cytoplasmic mislocation, phosphorylation of CDKN1B and inhibition of cell cycle arrest. Also interacts with CDK1. Dephosphorylated on Thr-187 by PPM1H, leading to CDKN1B stability. Post-translationally, phosphorylated; phosphorylation occurs on serine, threonine and tyrosine residues. Phosphorylation on Ser-10 is the major site of phosphorylation in resting cells, takes place at the G(0)-G(1) phase and leads to protein stability. Phosphorylation on other sites is greatly enhanced by mitogens, growth factors, cMYC and in certain cancer cell lines. The phosphorylated form found in the cytoplasm is inactivate. Phosphorylation on Thr-198 is required for interaction with 14-3-3 proteins. Phosphorylation on Thr-187, by CDK1 and CDK2 leads to protein ubiquitination and proteasomal degradation. Tyrosine phosphorylation promotes this process. Phosphorylation by PKB/AKT1 can be suppressed by LY294002, an inhibitor of the catalytic subunit of PI3K. Phosphorylation on Tyr-88 and Tyr-89 has no effect on binding CDK2, but is required for binding CDK4. Dephosphorylated on tyrosine residues by G-CSF. Dephosphorylated on Thr-187 by PPM1H, leading to CDKN1B stability. Ubiquitinated; in the cytoplasm by the KPC complex (composed of RNF123/KPC1 and UBAC1/KPC2) and, in the nucleus, by SCF(SKP2). The latter requires prior phosphorylation on Thr-187. Ubiquitinated; by a TRIM21-containing SCF(SKP2)-like complex; leads to its degradation. In terms of processing, subject to degradation in the lysosome. Interaction with SNX6 promotes lysosomal degradation.

It localises to the nucleus. It is found in the cytoplasm. The protein localises to the endosome. Functionally, important regulator of cell cycle progression. Inhibits the kinase activity of CDK2 bound to cyclin A, but has little inhibitory activity on CDK2 bound to SPDYA. Involved in G1 arrest. Potent inhibitor of cyclin E- and cyclin A-CDK2 complexes. Forms a complex with cyclin type D-CDK4 complexes and is involved in the assembly, stability, and modulation of CCND1-CDK4 complex activation. Acts either as an inhibitor or an activator of cyclin type D-CDK4 complexes depending on its phosphorylation state and/or stoichometry. This chain is Cyclin-dependent kinase inhibitor 1B (CDKN1B), found in Canis lupus familiaris (Dog).